The sequence spans 154 residues: Putative glutamine amidotransferase-like protein RP712 (154 aa).

A Glutamine amidotransferase type-1 domain is found at 1 to 94 (MSIEKEKFWA…QQSVWSFHNK (94 aa)).

This Rickettsia prowazekii (strain Madrid E) protein is Putative glutamine amidotransferase-like protein RP712.